A 395-amino-acid chain; its full sequence is Probable peptidoglycan glycosyltransferase FtsW (395 aa).

At 1-24 (MADLAAGVAERGPRLSLWSSLDQR) the chain is on the cytoplasmic side. A helical membrane pass occupies residues 25–45 (LVWVVAATALLGLVMVASASI). Over 46 to 62 (SMAEQATGDPFYFFKRQ) the chain is Periplasmic. The helical transmembrane segment at 63-83 (IFFALLGLGMALALLQIPLAT) threads the bilayer. The Cytoplasmic segment spans residues 84 to 86 (WER). A helical membrane pass occupies residues 87–107 (AGPGLLLGALALLVLVLIPGV). At 108-116 (GREVNGAVR) the chain is on the periplasmic side. Residues 117–137 (WIPLGVFNLQVAEVVKVLLAL) traverse the membrane as a helical segment. Topologically, residues 138 to 152 (YLAGFLVRRQQQLRT) are cytoplasmic. A helical transmembrane segment spans residues 153–173 (SMAAFLVPVLVSAACAFLLLL). Over 174 to 178 (QPDFG) the chain is Periplasmic. Residues 179–199 (TALMLMALAVGLLYLAGAPLW) traverse the membrane as a helical segment. A topological domain (cytoplasmic) is located at residue arginine 200. A helical transmembrane segment spans residues 201-221 (FAALVGVLAAAAAALVVYSPY). Topologically, residues 222–276 (RWQRVTAFMDPWSDPFNTGFQLTQSLIAIGRGDWLGVGLGGSVQKLFYLPEAHTD) are periplasmic. Residues 277–297 (FVFSVLAEELGWLGVLAVVLL) form a helical membrane-spanning segment. Residues 298–316 (FSYIVWRAMAVGWQCHRHR) lie on the Cytoplasmic side of the membrane. A helical membrane pass occupies residues 317-337 (LPFAGYLAWAVGLALGLQAFI). Residues 338-352 (NMGVATGLLPTKGLT) lie on the Periplasmic side of the membrane. The helical transmembrane segment at 353–373 (LPLFSYGGSSALATGAMVGLL) threads the bilayer. Over 374-395 (LRCGYELAQARAEGRRPEEAAS) the chain is Cytoplasmic.

The protein belongs to the SEDS family. FtsW subfamily.

The protein localises to the cell inner membrane. The enzyme catalyses [GlcNAc-(1-&gt;4)-Mur2Ac(oyl-L-Ala-gamma-D-Glu-L-Lys-D-Ala-D-Ala)](n)-di-trans,octa-cis-undecaprenyl diphosphate + beta-D-GlcNAc-(1-&gt;4)-Mur2Ac(oyl-L-Ala-gamma-D-Glu-L-Lys-D-Ala-D-Ala)-di-trans,octa-cis-undecaprenyl diphosphate = [GlcNAc-(1-&gt;4)-Mur2Ac(oyl-L-Ala-gamma-D-Glu-L-Lys-D-Ala-D-Ala)](n+1)-di-trans,octa-cis-undecaprenyl diphosphate + di-trans,octa-cis-undecaprenyl diphosphate + H(+). Its pathway is cell wall biogenesis; peptidoglycan biosynthesis. In terms of biological role, peptidoglycan polymerase that is essential for cell division. The polypeptide is Probable peptidoglycan glycosyltransferase FtsW (Halorhodospira halophila (strain DSM 244 / SL1) (Ectothiorhodospira halophila (strain DSM 244 / SL1))).